Reading from the N-terminus, the 397-residue chain is Tryptophan synthase beta chain (397 aa).

Lys-87 carries the post-translational modification N6-(pyridoxal phosphate)lysine.

It belongs to the TrpB family. As to quaternary structure, tetramer of two alpha and two beta chains. Pyridoxal 5'-phosphate is required as a cofactor.

The enzyme catalyses (1S,2R)-1-C-(indol-3-yl)glycerol 3-phosphate + L-serine = D-glyceraldehyde 3-phosphate + L-tryptophan + H2O. It participates in amino-acid biosynthesis; L-tryptophan biosynthesis; L-tryptophan from chorismate: step 5/5. Its function is as follows. The beta subunit is responsible for the synthesis of L-tryptophan from indole and L-serine. In Escherichia coli O139:H28 (strain E24377A / ETEC), this protein is Tryptophan synthase beta chain.